Here is a 292-residue protein sequence, read N- to C-terminus: Putative pyruvate, phosphate dikinase regulatory protein (292 aa).

155-162 contacts ADP; the sequence is GVSRSSKT.

Belongs to the pyruvate, phosphate/water dikinase regulatory protein family. PDRP subfamily.

It catalyses the reaction N(tele)-phospho-L-histidyl/L-threonyl-[pyruvate, phosphate dikinase] + ADP = N(tele)-phospho-L-histidyl/O-phospho-L-threonyl-[pyruvate, phosphate dikinase] + AMP + H(+). The enzyme catalyses N(tele)-phospho-L-histidyl/O-phospho-L-threonyl-[pyruvate, phosphate dikinase] + phosphate + H(+) = N(tele)-phospho-L-histidyl/L-threonyl-[pyruvate, phosphate dikinase] + diphosphate. Its function is as follows. Bifunctional serine/threonine kinase and phosphorylase involved in the regulation of the pyruvate, phosphate dikinase (PPDK) by catalyzing its phosphorylation/dephosphorylation. The chain is Putative pyruvate, phosphate dikinase regulatory protein from Acidiphilium cryptum (strain JF-5).